The chain runs to 198 residues: DNA polymerase zeta subunit 2 (198 aa).

The region spanning 4–196 is the HORMA domain; that stretch reads EIKADIIVEA…DLGLKMDVLI (193 aa).

It belongs to the MAD2 family. As to quaternary structure, accessory subunit of the zeta DNA polymerase complex, which consists of the catalytic component PolZ1/DNApol-zeta and PolZ2/Rev7. Interacts with the apurinic/apyrimidinic (AP) endonuclease Rrp1 (via the N-terminus).

As the accessory component of the DNA polymerase zeta complex, involved in translesion DNA synthesis (TLS) and various DNA repair mechanisms. Promotes the apurinic/apyrimidinic (AP) endonuclease activity of Rrp1 and is therefore likely to be involved in the base excision repair (BER) pathway responsible for repair of DNA lesions. It does not appear to influence the synthesis activity of the catalytic component Dmpol-zeta. This Drosophila melanogaster (Fruit fly) protein is DNA polymerase zeta subunit 2.